A 283-amino-acid chain; its full sequence is Ribose-phosphate pyrophosphokinase (283 aa).

ATP contacts are provided by residues 34 to 36 (DGE) and 89 to 90 (RQ). Mg(2+) contacts are provided by His-120 and Asp-159. Lys-182 is an active-site residue. Arg-184 and Asp-208 together coordinate D-ribose 5-phosphate.

It belongs to the ribose-phosphate pyrophosphokinase family. Class III (archaeal) subfamily. Mg(2+) serves as cofactor.

The protein resides in the cytoplasm. The catalysed reaction is D-ribose 5-phosphate + ATP = 5-phospho-alpha-D-ribose 1-diphosphate + AMP + H(+). It participates in metabolic intermediate biosynthesis; 5-phospho-alpha-D-ribose 1-diphosphate biosynthesis; 5-phospho-alpha-D-ribose 1-diphosphate from D-ribose 5-phosphate (route I): step 1/1. Involved in the biosynthesis of the central metabolite phospho-alpha-D-ribosyl-1-pyrophosphate (PRPP) via the transfer of pyrophosphoryl group from ATP to 1-hydroxyl of ribose-5-phosphate (Rib-5-P). The sequence is that of Ribose-phosphate pyrophosphokinase from Methanosarcina acetivorans (strain ATCC 35395 / DSM 2834 / JCM 12185 / C2A).